The primary structure comprises 89 residues: Long neurotoxin homolog NTL2 (89 aa).

A signal peptide spans 1 to 21; sequence MKTLLLSLVVVIIVCLDLGYT. 5 disulfide bridges follow: C24–C45, C27–C32, C38–C66, C70–C81, and C82–C87. The Cell attachment site motif lies at 54-56; it reads RGD.

It belongs to the three-finger toxin family. Ancestral subfamily. Orphan group V sub-subfamily. In terms of tissue distribution, expressed by the venom gland.

The protein localises to the secreted. In terms of biological role, exhibits M2 muscarinic acetylcholine receptor (CHRM2)-blocking activity, but has a weak binding activity toward nicotinic AChR. Moreover, it inhibits collagen-induced platelet aggregation. The chain is Long neurotoxin homolog NTL2 from Bungarus multicinctus (Many-banded krait).